Consider the following 227-residue polypeptide: E3 ubiquitin-protein ligase ZNRF1 (227 aa).

The disordered stretch occupies residues 1–42 (MGGKQSTAARSRGPFPGVSTDDSAVPPPGGAPHFGHYRTGGG). The N-myristoyl glycine moiety is linked to residue Gly-2. Positions 2 to 10 (GGKQSTAAR) are required for endosomal and lysosomal localization and myristoylation. Residues Ser-50, Ser-52, and Ser-53 each carry the phosphoserine modification. Positions 68–105 (PFGLYTPASRGTGDSERAPGGGGSASDSTYAHGNGYQE) are disordered. At Tyr-103 the chain carries Phosphotyrosine; by SRC. Ser-123 is subject to Phosphoserine. The RING-type; atypical zinc finger occupies 184–225 (CVICLEELLQGDTIARLPCLCIYHKSCIDSWFEVNRSCPEHP).

As to quaternary structure, interacts with AKT1, GLUL and TUBB2A. Interacts with ZNRF2. Interacts (via its RING domain) with UBE2N. Interacts (when phosphorylated) with YWHAE. Post-translationally, N-myristoylation targets ZNRF1 to intracellular membranes. Phosphorylated by SRC at Tyr-103; leading to 'Lys-63'-linked ubiquitination of TLR3, lysosomal trafficking and degradation. As to expression, expressed primarily in the nervous system, with expression higher in developing brain relative to adult. Expressed at low levels in testis and thymus.

It localises to the endosome. The protein localises to the lysosome. It is found in the membrane. The protein resides in the cytoplasmic vesicle. Its subcellular location is the secretory vesicle. It localises to the synaptic vesicle membrane. It carries out the reaction S-ubiquitinyl-[E2 ubiquitin-conjugating enzyme]-L-cysteine + [acceptor protein]-L-lysine = [E2 ubiquitin-conjugating enzyme]-L-cysteine + N(6)-ubiquitinyl-[acceptor protein]-L-lysine.. It functions in the pathway protein modification; protein ubiquitination. Its function is as follows. E3 ubiquitin-protein ligase that plays a role in different processes including cell differentiation, receptor recycling or regulation of inflammation. Mediates the ubiquitination of AKT1 and GLUL, thereby playing a role in neuron cells differentiation. Plays a role in the establishment and maintenance of neuronal transmission and plasticity. Regulates Schwann cells differentiation by mediating ubiquitination of GLUL. Promotes neurodegeneration by mediating 'Lys-48'-linked polyubiquitination and subsequent degradation of AKT1 in axons: degradation of AKT1 prevents AKT1-mediated phosphorylation of GSK3B, leading to GSK3B activation and phosphorylation of DPYSL2/CRMP2 followed by destabilization of microtubule assembly in axons. Ubiquitinates the Na(+)/K(+) ATPase alpha-1 subunit/ATP1A1 and thereby influences its endocytosis and/or degradation. Controls ligand-induced EGFR signaling via mediating receptor ubiquitination and recruitment of the ESCRT machinery. Acts as a negative feedback mechanism controlling TLR3 trafficking by mediating TLR3 'Lys-63'-linked polyubiquitination to reduce type I IFN production. Modulates inflammation by promoting caveolin-1/CAV1 ubiquitination and degradation to regulate TLR4-activated immune response. The polypeptide is E3 ubiquitin-protein ligase ZNRF1 (ZNRF1) (Homo sapiens (Human)).